The following is a 117-amino-acid chain: Cuticular protein 47Eg (117 aa).

The signal sequence occupies residues 1-16 (MKFFIAFACLLAVALA). One can recognise a Chitin-binding type R&amp;R domain in the interval 31–97 (VDGFAYAVEL…SANPPLPTPP (67 aa)).

Component of the larval cuticle. The chain is Cuticular protein 47Eg (Cpr47Eg) from Drosophila melanogaster (Fruit fly).